The sequence spans 375 residues: uncharacterized protein (375 aa).

The protein belongs to the IMPDH/GMPR family.

This is an uncharacterized protein from Mycobacterium tuberculosis (strain CDC 1551 / Oshkosh).